A 312-amino-acid chain; its full sequence is MDGDNQSENSQFLLLGISESPEQQQILFWMFLSMYLVTVLGNVLIILAISSDSRLHTPMYFFLANLSFTDLFFVTNTIPKMLVNLQSQNKAISYAGCLTQLYFLVSLVTLDNLILAVMAYDRYVAICCPLHYVTAMSPGLCVLLLSLCWGLSVFYGLLLTLLLTRVTFCGPREIHYLFCDMYILLRLACSNTHIIHTVLVATGCFIFLTPLGFMTTSYVRIVRTILQIPSASKKYKAFSTCASHLGVVSLFYGTLAMVYLQPLHTYSMKDSVATVMYAVVTPMMNPFIHSLRNKDMHGALGRVLRRLFQRPK.

Residues 1-25 (MDGDNQSENSQFLLLGISESPEQQQ) are Extracellular-facing. N5 is a glycosylation site (N-linked (GlcNAc...) asparagine). The helical transmembrane segment at 26–49 (ILFWMFLSMYLVTVLGNVLIILAI) threads the bilayer. Topologically, residues 50–57 (SSDSRLHT) are cytoplasmic. The helical transmembrane segment at 58 to 79 (PMYFFLANLSFTDLFFVTNTIP) threads the bilayer. At 80 to 100 (KMLVNLQSQNKAISYAGCLTQ) the chain is on the extracellular side. An intrachain disulfide couples C97 to C189. A helical membrane pass occupies residues 101–120 (LYFLVSLVTLDNLILAVMAY). Residues 121–140 (DRYVAICCPLHYVTAMSPGL) are Cytoplasmic-facing. Residues 141–158 (CVLLLSLCWGLSVFYGLL) traverse the membrane as a helical segment. The Extracellular portion of the chain corresponds to 159–196 (LTLLLTRVTFCGPREIHYLFCDMYILLRLACSNTHIIH). The helical transmembrane segment at 197–220 (TVLVATGCFIFLTPLGFMTTSYVR) threads the bilayer. The Cytoplasmic segment spans residues 221-237 (IVRTILQIPSASKKYKA). Residues 238–260 (FSTCASHLGVVSLFYGTLAMVYL) traverse the membrane as a helical segment. The Extracellular portion of the chain corresponds to 261–271 (QPLHTYSMKDS). Residues 272-291 (VATVMYAVVTPMMNPFIHSL) form a helical membrane-spanning segment. Residues 292–312 (RNKDMHGALGRVLRRLFQRPK) lie on the Cytoplasmic side of the membrane.

Belongs to the G-protein coupled receptor 1 family.

Its subcellular location is the cell membrane. In terms of biological role, odorant receptor. This is Olfactory receptor 1D5 (OR1D5) from Pan troglodytes (Chimpanzee).